Reading from the N-terminus, the 699-residue chain is Glycine--tRNA ligase beta subunit (699 aa).

The protein belongs to the class-II aminoacyl-tRNA synthetase family. In terms of assembly, tetramer of two alpha and two beta subunits.

Its subcellular location is the cytoplasm. It carries out the reaction tRNA(Gly) + glycine + ATP = glycyl-tRNA(Gly) + AMP + diphosphate. This is Glycine--tRNA ligase beta subunit from Baumannia cicadellinicola subsp. Homalodisca coagulata.